The chain runs to 106 residues: Large ribosomal subunit protein uL23 (106 aa).

Belongs to the universal ribosomal protein uL23 family. Part of the 50S ribosomal subunit. Contacts protein L29, and trigger factor when it is bound to the ribosome.

In terms of biological role, one of the early assembly proteins it binds 23S rRNA. One of the proteins that surrounds the polypeptide exit tunnel on the outside of the ribosome. Forms the main docking site for trigger factor binding to the ribosome. In Acinetobacter baumannii (strain SDF), this protein is Large ribosomal subunit protein uL23.